We begin with the raw amino-acid sequence, 76 residues long: MRRWISQNNIRLPRGAFFISALFFFNAVCIVSDNLLIIESFGEMAYNISYLTRVPGTNTLLACCCLLRPEEVNSEY.

A helical transmembrane segment spans residues 18–38; it reads FISALFFFNAVCIVSDNLLII.

The protein resides in the cell membrane. This is an uncharacterized protein from Escherichia coli O6:H1 (strain CFT073 / ATCC 700928 / UPEC).